The primary structure comprises 458 residues: MKTELSEVWQQCIDHLERHTSKTAIENWVRSTRPVAVVEDTIIVGVQGEFAKHRMESRYAPLLRQALRDLTKRNMQLKFVANPNVIEDPAAEPVDAPNVADLPAGTSAPAAEQNARLLGYINPKYTFETFVVGNSNRFAHAAALAVAETPARTYNPLFIYGGVGLGKTHLMHAIGHYVLQHNPTAKVAYVSTETFTNEFIMAIQKGSTTAFQNRYRKVDVLLIDDIQFLAGKEATQEEFYHTFNAIREANKQIVISSDRPPKEIPTLEDRLRSRFEWGLICDIQPPDLETRTAILRKKAQSEGIQVPDEVTNYIATNIETNIRELEGALTRVVAYANMLKCPLTYDLAVQALKDILPPVRPKQITIATIKQVVAEHYNIRMQDFEVRNRSRAVAYPRQIAMYLARELTDSSLPKIGEEFGGRDHTTVIHACEKIAKDIQSDPAFAHTIEQLIARIRAE.

The tract at residues 1 to 93 is domain I, interacts with DnaA modulators; sequence MKTELSEVWQ…NVIEDPAAEP (93 aa). The interval 94-119 is domain II; it reads VDAPNVADLPAGTSAPAAEQNARLLG. The interval 120-336 is domain III, AAA+ region; that stretch reads YINPKYTFET…GALTRVVAYA (217 aa). The ATP site is built by glycine 164, glycine 166, lysine 167, and threonine 168. Positions 337–458 are domain IV, binds dsDNA; it reads NMLKCPLTYD…EQLIARIRAE (122 aa).

The protein belongs to the DnaA family. Oligomerizes as a right-handed, spiral filament on DNA at oriC.

It localises to the cytoplasm. Functionally, plays an essential role in the initiation and regulation of chromosomal replication. ATP-DnaA binds to the origin of replication (oriC) to initiate formation of the DNA replication initiation complex once per cell cycle. Binds the DnaA box (a 9 base pair repeat at the origin) and separates the double-stranded (ds)DNA. Forms a right-handed helical filament on oriC DNA; dsDNA binds to the exterior of the filament while single-stranded (ss)DNA is stabiized in the filament's interior. The ATP-DnaA-oriC complex binds and stabilizes one strand of the AT-rich DNA unwinding element (DUE), permitting loading of DNA polymerase. After initiation quickly degrades to an ADP-DnaA complex that is not apt for DNA replication. Binds acidic phospholipids. This is Chromosomal replication initiator protein DnaA from Symbiobacterium thermophilum (strain DSM 24528 / JCM 14929 / IAM 14863 / T).